The primary structure comprises 286 residues: Nucleotide-binding protein PLES_48441 (286 aa).

8–15 (GRSGSGKS) lines the ATP pocket. 60–63 (DARN) is a binding site for GTP.

Belongs to the RapZ-like family.

Displays ATPase and GTPase activities. The protein is Nucleotide-binding protein PLES_48441 of Pseudomonas aeruginosa (strain LESB58).